The primary structure comprises 837 residues: MTQVTVKQLADEVKTPVERLLQQMREAGLPHTAAEENVTDSEKQSLLTHLKSSHKAKVEEPRKITLQRKTTSTLRVAGSKSISVEVRKKKVFVQRSPEEIEAERKRELDERRAVENAARQKAEEEARVRAEEEARRQPAAPSAPAEAVAAPAPVAEPVREAAPVVAAAPAADTRKRDEQRRPDKPRADDNNRRGGDGERKNAPHRASVKEKAPAPRVAPRTTDEESDGFRRGGRGKAKLKKRNAHGFQSPTGPVVREVKIGETITVGDLAQQMSVKAAEIIKFMFKLGTPATINQVLDQETAQLVAEELGHKVTLVSDTALEDSLAESLKFEGEAVPRAPVVTVMGHVDHGKTSLLDYIRRAKVAAGEAGGITQHIGAYHVETERGMVTFLDTPGHAAFTAMRARGAKATDIVILVVAADDGVMPQTIEAVQHAVAAGVPLVVAVNKIDKPGADLDRIRSELSAHGVTSEDWGGDTPFVPVSAKMGTGVDELLEAVLLQAEVLELTATPSAPGRGVVVESRLDKGRGPVATVLVQDGTLRQGDMVLVGSNYGRVRAMLDENGKPIKEAGPAIPVEILGLDGTPDAGDEMSVVADEKKAREVALFRQGKFREVKLARAHAGKLENIFESMGQEEKKTLNIVLKSDVRGSLEALQGALNGLGNDEVQVRVVGGGVGGITESDANLALASNAVLFGFNVRADAGARKIVEQEGLDMRYYNVIYDIIEDVKKALTGMLGSDVRENILGVAEVRDVFRSPKFGAIAGCMVIEGTVHRNRPIRVLREDIVIFEGELESLRRFKDDASEVRAGMECGIGVKSYNDVKVGDKIEVFEKVQVARSL.

The tract at residues 94–252 is disordered; that stretch reads QRSPEEIEAE…NAHGFQSPTG (159 aa). Basic and acidic residues predominate over residues 96–136; sequence SPEEIEAERKRELDERRAVENAARQKAEEEARVRAEEEARR. Residues 137-171 are compositionally biased toward low complexity; it reads QPAAPSAPAEAVAAPAPVAEPVREAAPVVAAAPAA. Composition is skewed to basic and acidic residues over residues 172 to 213 and 221 to 230; these read DTRK…EKAP and TTDEESDGFR. Positions 231 to 244 are enriched in basic residues; it reads RGGRGKAKLKKRNA. One can recognise a tr-type G domain in the interval 337–506; sequence PRAPVVTVMG…LLQAEVLELT (170 aa). Positions 346 to 353 are G1; it reads GHVDHGKT. Residue 346–353 coordinates GTP; that stretch reads GHVDHGKT. The G2 stretch occupies residues 371-375; that stretch reads GITQH. The segment at 392–395 is G3; sequence DTPG. GTP-binding positions include 392 to 396 and 446 to 449; these read DTPGH and NKID. The segment at 446-449 is G4; that stretch reads NKID. The tract at residues 482-484 is G5; that stretch reads SAK.

This sequence belongs to the TRAFAC class translation factor GTPase superfamily. Classic translation factor GTPase family. IF-2 subfamily.

Its subcellular location is the cytoplasm. One of the essential components for the initiation of protein synthesis. Protects formylmethionyl-tRNA from spontaneous hydrolysis and promotes its binding to the 30S ribosomal subunits. Also involved in the hydrolysis of GTP during the formation of the 70S ribosomal complex. The chain is Translation initiation factor IF-2 from Pseudomonas fluorescens (strain Pf0-1).